The sequence spans 474 residues: Protein NAR1 (474 aa).

8 residues coordinate [4Fe-4S] cluster: Cys-24, Cys-61, Cys-64, Cys-67, Cys-177, Cys-233, Cys-390, and Cys-394.

It belongs to the NARF family. As to quaternary structure, part of a complex composed of AE7, CIA1, MMS19 and NAR1. Interacts with CIA1. As to expression, expressed in developing tissues, including shoot apex, young leaves, vascular tissues, root tips, pedicels, carpels and developing seeds.

It localises to the nucleus. The protein resides in the cytoplasm. Functionally, essential component of the cytosolic iron-sulfur (Fe-S) protein assembly (CIA) machinery. Required for the maturation of extramitochondrial Fe/S proteins. Required for expression of the imprinted FWA gene, for seed development and is involved in the oxidative stress response in vegetative tissues. Involved in the regulation of cell size, ploidy and cell cycle progression. Required for growth under normoxic conditions and necessary for recovery after hypoxic treatment but its action is reactive oxygen species (ROS) independent. This is Protein NAR1 from Arabidopsis thaliana (Mouse-ear cress).